A 361-amino-acid chain; its full sequence is Hydroxycarboxylate dehydrogenase B (361 aa).

NAD(+) is bound by residues H48, 122–124, 178–182, H234, N270, and 313–316; these read GRI, LLDYA, and GEWE.

It belongs to the LDH2/MDH2 oxidoreductase family.

The enzyme catalyses 2-hydroxyglutarate + NADP(+) = 2-oxoglutarate + NADPH + H(+). The catalysed reaction is 2-hydroxyglutarate + NAD(+) = 2-oxoglutarate + NADH + H(+). It carries out the reaction 3-phenyllactate + NADP(+) = 3-phenylpyruvate + NADPH + H(+). It catalyses the reaction 3-phenyllactate + NAD(+) = 3-phenylpyruvate + NADH + H(+). The enzyme catalyses (2R)-2-hydroxy-3-(4-hydroxyphenyl)propanoate + NAD(+) = 3-(4-hydroxyphenyl)pyruvate + NADH + H(+). The catalysed reaction is (2R)-2-hydroxy-3-(4-hydroxyphenyl)propanoate + NADP(+) = 3-(4-hydroxyphenyl)pyruvate + NADPH + H(+). It carries out the reaction (2R)-3-(3,4-dihydroxyphenyl)lactate + NADP(+) = 3-(3,4-dihydroxyphenyl)pyruvate + NADPH + H(+). It catalyses the reaction (2R)-3-(3,4-dihydroxyphenyl)lactate + NAD(+) = 3-(3,4-dihydroxyphenyl)pyruvate + NADH + H(+). Functionally, catalyzes the NAD(P)H-dependent reduction of 2-oxoglutarate, phenylpyruvate and (4-hydroxyphenyl)pyruvate, leading to the respective 2-hydroxycarboxylate in vitro. Shows a preference for NADPH over NADH as a redox partner. Do not catalyze the reverse reactions. This chain is Hydroxycarboxylate dehydrogenase B, found in Escherichia coli O157:H7.